Here is a 794-residue protein sequence, read N- to C-terminus: Protein IQ-DOMAIN 32 (794 aa).

Residues 15 to 101 (CSGGDDTSAD…QSFSVDEKKS (87 aa)) are disordered. 2 stretches are compositionally biased toward polar residues: residues 23–33 (ADPNSTALENK) and 56–65 (SVVSETTPAS). Phosphoserine occurs at positions 78, 80, 142, 193, and 195. Positions 80–95 (SPDNNNVSEKQQQSFS) are enriched in polar residues. IQ domains are found at residues 214–242 (DESVIVVIQAAVRGFLARRELLRSKKVIK) and 243–265 (LQAAVRGHLVRSQAMGSLRCVQA). Residues 230–241 (ARRELLRSKKVI) are calmodulin-binding. Residues 277–296 (HSTKDGSRVSATSDKSEPNA) form a disordered region. Serine 369 carries the phosphoserine modification. The segment at 375–417 (VNSDSTVENKTETDMPSYEASKVEGQNVELSETEKMSQYDSPE) is disordered. Position 459 is a phosphoserine (serine 459). Disordered stretches follow at residues 472 to 555 (ELTS…RVEA) and 578 to 794 (ATSM…KWQR). Positions 473 to 486 (LTSSTGSNKAMTLS) are enriched in polar residues. Over residues 487-500 (SKDDVLGEEGKTDI) the composition is skewed to basic and acidic residues. Phosphoserine occurs at positions 502 and 544. Composition is skewed to basic and acidic residues over residues 539 to 555 (TLEKKSDAEGAEPRVEA) and 585 to 607 (EDPKEKVENAKDEVEISATHHEP). Residues 643–654 (SQATPASQASSS) show a composition bias toward low complexity. The Nuclear localization signal motif lies at 657-664 (ARKGKSEK). Residues 768-786 (NGKQVSPRIQRSASQAQQG) show a composition bias toward polar residues.

The protein belongs to the IQD family. Binds to multiple calmodulin (CaM) in the presence of Ca(2+) and CaM-like proteins.

It is found in the nucleus. It localises to the cytoplasm. The protein resides in the cytoskeleton. Functionally, may be involved in cooperative interactions with calmodulins or calmodulin-like proteins. Recruits calmodulin proteins to microtubules, thus being a potential scaffold in cellular signaling and trafficking. May associate with nucleic acids and regulate gene expression at the transcriptional or post-transcriptional level. The protein is Protein IQ-DOMAIN 32 of Arabidopsis thaliana (Mouse-ear cress).